The primary structure comprises 4095 residues: Protein adenylyltransferase and cysteine protease IbpA (4095 aa).

Positions 1 to 97 (MNKNCYKLIF…MVAAPNFAQS (97 aa)) are cleaved as a signal peptide. Binds bovine IgG2 Fc stretches follow at residues 972–1515 (SERI…FVKA) and 1116–1255 (SEVQ…FLKE). Disordered stretches follow at residues 1082–1117 (EVSDDWERDPDEPDEPDYKTESRLETRDRFDTLPSE), 1130–1154 (KEKAQQKRQAEALQAKTKNEQLQSD), 1204–1223 (QEALAKQKQEQQKQADAKAK), 1625–1652 (TVSHERDSQNGEKTNIGGASSNTGTGFT), and 1705–1732 (EEDEAKAEQQAKAKAAPDATDNAAQKEE). Residues 1087 to 1096 (WERDPDEPDE) are compositionally biased toward acidic residues. Composition is skewed to basic and acidic residues over residues 1097–1117 (PDYKTESRLETRDRFDTLPSE) and 1130–1139 (KEKAQQKRQA). Residues 1116–1247 (SEVQDKLRQK…AKDHQIEEAL (132 aa)) adopt a coiled-coil conformation. The span at 1716–1727 (KAKAAPDATDNA) shows a compositional bias: low complexity. Repeat copies occupy residues 2250–2271 (YSTLGDQNANKGRKLPNGSDDI), 2272–2295 (YSLLGKVKVSGDEPVYDKVSAEGA), 2296–2317 (YDLLGDSNANKGRTLRNNSDDL), 2318–2343 (YSTVGDANSDISRIRSNVYDEIAAGP), 2344–2365 (YSLLGRTKAAEEHIYEQIGEGP), 2366–2387 (YSLLGNGSAVRNRTLGGESNST), 2388–2413 (YSTVGDANSDISRIRSNVYDEIVAGP), 2414–2435 (YSLLGKPKAAEEHIYEQIGEGP), 2436–2457 (YSLLGNGSAVRNRTLGGESDSP), 2458–2483 (YSTVGDANSDISRIRSNVYDEIVAGP), 2484–2505 (YSLLGRTKAAEEHIYEQIGEGP), and 2506–2527 (YSLLGNGSAVRNRTLGGESDSP). The segment at 2250-2527 (YSTLGDQNAN…RTLGGESDSP (278 aa)) is 12 X 22 AA approximate repeats. Polar residues-rich tracts occupy residues 2592 to 2611 (SDTEAGNGTYSEITSRTRNA) and 2794 to 2803 (TAPQKTSPVK). Disordered stretches follow at residues 2592-2617 (SDTEAGNGTYSEITSRTRNANDPLPP), 2765-2809 (TIGE…SAEG), 2825-2894 (AKGQ…SPKR), 2914-2933 (LKSKEDQANPAKAEVSEPIY), 2943-3033 (LARA…KSED), and 3049-3069 (NKSQAKEAKSEQETVSKPNYD). Low complexity predominate over residues 2880–2889 (PFPSEFSSEP). 2 stretches are compositionally biased toward polar residues: residues 2977–2996 (SNLSDSISNETIAENGQSVA) and 3005–3018 (AESNRNNNGNQKLQ). Basic and acidic residues predominate over residues 3052-3062 (QAKEAKSEQET). Residues 3218-3355 (LTVEMIEKLN…AEVVKEFLTE (138 aa)) form the Fido 1 domain. The interval 3222 to 4095 (MIEKLNHGLR…FNVVNYKKNN (874 aa)) is yopT-like. The binds bovine IgG2 Fc stretch occupies residues 3354-3698 (TELGKKSSPQ…VDFINRAKNE (345 aa)). Disordered stretches follow at residues 3357-3415 (GKKS…PSVP) and 3432-3454 (AELKDAAGGNKKAAEKSEGATGV). Polar residues-rich tracts occupy residues 3360–3379 (SSPQEGGANNQNGQATSPVT) and 3388–3401 (VENTQSADSLTIKQ). Residues 3443–3454 (KAAEKSEGATGV) show a composition bias toward basic and acidic residues. Residues 3535-3557 (IPEATVKQMSHLPEFDDILTEGA) form an arm region region. One can recognise a Fido 2 domain in the interval 3640-3777 (LTVQMIENLN…SEVVVEFLKE (138 aa)). ATP is bound by residues 3670 to 3671 (KE), 3722 to 3724 (GNG), arginine 3728, and glutamine 3757. The span at 3783-3798 (SKEDNEQNLEKTDRTS) shows a compositional bias: basic and acidic residues. A disordered region spans residues 3783–3829 (SKEDNEQNLEKTDRTSTDLTESAVENSAALSSGTVRSATVSETVTET). Residues 3799-3815 (TDLTESAVENSAALSSG) are compositionally biased toward polar residues. Low complexity predominate over residues 3816–3829 (TVRSATVSETVTET). Catalysis depends on for cysteine protease activity residues cysteine 3910, histidine 4033, and aspartate 4048.

It in the central section; belongs to the fic family. The protein in the C-terminal section; belongs to the peptidase C58 family. As to quaternary structure, immunoglobulin-binding protein. The long form of the protein is probably processed, and/or the transcript may be subject to differential translational initiation.

The protein localises to the secreted. It localises to the cell outer membrane. It catalyses the reaction L-tyrosyl-[protein] + ATP = O-(5'-adenylyl)-L-tyrosyl-[protein] + diphosphate. It carries out the reaction L-threonyl-[protein] + ATP = 3-O-(5'-adenylyl)-L-threonyl-[protein] + diphosphate. In terms of biological role, adenylyltransferase involved in virulence by mediating the addition of adenosine 5'-monophosphate (AMP) to specific tyrosine residue of host Rho GTPases RhoA, Rac and Cdc42. The resulting AMPylation inactivates Rho GTPases, thereby inhibiting actin assembly in infected cells. Probably also acts as a cysteine protease, which may play a central role after invasion of host cell and in virulence. Possible member (with IbpB) of a 2 partner secretion. Probably able to bind bovine epithelial cells (host cells). May participate in the formation of fibrils at the surface of the bacteria. This chain is Protein adenylyltransferase and cysteine protease IbpA (ibpA), found in Histophilus somni (strain 2336) (Haemophilus somnus).